We begin with the raw amino-acid sequence, 253 residues long: Proteasome subunit alpha (253 aa).

The disordered stretch occupies residues 229-253 (ADESQSYIDDIEDAADDSDDDDDEE). The segment covering 237–253 (DDIEDAADDSDDDDDEE) has biased composition (acidic residues).

Belongs to the peptidase T1A family. The 20S proteasome core is composed of 14 alpha and 14 beta subunits that assemble into four stacked heptameric rings, resulting in a barrel-shaped structure. The two inner rings, each composed of seven catalytic beta subunits, are sandwiched by two outer rings, each composed of seven alpha subunits. The catalytic chamber with the active sites is on the inside of the barrel. Has a gated structure, the ends of the cylinder being occluded by the N-termini of the alpha-subunits. Is capped at one or both ends by the proteasome regulatory ATPase, PAN.

The protein resides in the cytoplasm. The formation of the proteasomal ATPase PAN-20S proteasome complex, via the docking of the C-termini of PAN into the intersubunit pockets in the alpha-rings, triggers opening of the gate for substrate entry. Interconversion between the open-gate and close-gate conformations leads to a dynamic regulation of the 20S proteasome proteolysis activity. Component of the proteasome core, a large protease complex with broad specificity involved in protein degradation. The protein is Proteasome subunit alpha of Halobacterium salinarum (strain ATCC 29341 / DSM 671 / R1).